The sequence spans 90 residues: Toxin 3FTx-Psa1 (90 aa).

The signal sequence occupies residues 1–21 (MKTLPLVLAVVAFVYLDLAHT). 4 cysteine pairs are disulfide-bonded: Cys-24-Cys-43, Cys-36-Cys-61, Cys-65-Cys-76, and Cys-77-Cys-82.

Belongs to the three-finger toxin family. Ancestral subfamily. In terms of tissue distribution, expressed by the venom gland.

It is found in the secreted. This Psammophis mossambicus (Olive sand snake) protein is Toxin 3FTx-Psa1.